Reading from the N-terminus, the 81-residue chain is Protein Vpu (81 aa).

The Extracellular portion of the chain corresponds to 1-7; that stretch reads MQPLQIL. The helical transmembrane segment at 8 to 28 threads the bilayer; sequence SIVALVVAAIIAIVVWSIVFI. Over 29–81 the chain is Cytoplasmic; it reads LIRKILRQRKIDRLIDRIRERAEDSGNESEGIRKELSALVEMGHDAPGDIDDL. Phosphoserine; by host CK2 is present on residues Ser-53 and Ser-57.

It belongs to the HIV-1 VPU protein family. Homopentamer. Interacts with host CD4 and BRTC; these interactions induce proteasomal degradation of CD4. Interacts with host BST2; this interaction leads to the degradation of host BST2. Interacts with host FBXW11. Interacts with host AP1M1; this interaction plays a role in the mistrafficking and subsequent degradation of host BST2. Interacts with host RANBP2; this interaction allows Vpu to down-regulate host BLM sumoylation. In terms of processing, phosphorylated by host CK2. This phosphorylation is necessary for interaction with human BTRC and degradation of CD4.

It is found in the host membrane. Ion channel activity is inhibited by hexamethylene amiloride in vitro. In terms of biological role, enhances virion budding by targeting host CD4 and Tetherin/BST2 to proteasome degradation. Degradation of CD4 prevents any unwanted premature interactions between viral Env and its host receptor CD4 in the endoplasmic reticulum. Degradation of antiretroviral protein Tetherin/BST2 is important for virion budding, as BST2 tethers new viral particles to the host cell membrane. Mechanistically, Vpu bridges either CD4 or BST2 to BTRC, a substrate recognition subunit of the Skp1/Cullin/F-box protein E3 ubiquitin ligase, induces their ubiquitination and subsequent proteasomal degradation. The alteration of the E3 ligase specificity by Vpu seems to promote the degradation of host IKBKB, leading to NF-kappa-B down-regulation and subsequent apoptosis. Acts as a viroporin that forms an oligomeric ion channel in membranes. Modulates the host DNA repair mechanisms to promote degradation of nuclear viral cDNA in cells that are already productively infected in order to suppress immune sensing and proviral hyper-integration (superinfection). Manipulates PML-NBs and modulates SUMOylation of host BLM protein thereby enhancing its DNA-end processing activity toward viral unintegrated linear DNA. Also inhibits RAD52-mediated homologous repair of viral cDNA, preventing the generation of dead-end circular forms of single copies of the long terminal repeat and permitting sustained nucleolytic attack. This is Protein Vpu from Homo sapiens (Human).